Reading from the N-terminus, the 241-residue chain is Probable transcriptional regulatory protein LHK_02347 (241 aa).

The protein belongs to the TACO1 family.

Its subcellular location is the cytoplasm. The chain is Probable transcriptional regulatory protein LHK_02347 from Laribacter hongkongensis (strain HLHK9).